The primary structure comprises 77 residues: NAD(P)H-quinone oxidoreductase subunit L (77 aa).

Helical transmembrane passes span 12-32 (LIAY…LLFY) and 47-67 (LGIY…SPFL).

This sequence belongs to the complex I NdhL subunit family. In terms of assembly, NDH-1 can be composed of about 15 different subunits; different subcomplexes with different compositions have been identified which probably have different functions.

It is found in the cellular thylakoid membrane. It carries out the reaction a plastoquinone + NADH + (n+1) H(+)(in) = a plastoquinol + NAD(+) + n H(+)(out). It catalyses the reaction a plastoquinone + NADPH + (n+1) H(+)(in) = a plastoquinol + NADP(+) + n H(+)(out). In terms of biological role, NDH-1 shuttles electrons from an unknown electron donor, via FMN and iron-sulfur (Fe-S) centers, to quinones in the respiratory and/or the photosynthetic chain. The immediate electron acceptor for the enzyme in this species is believed to be plastoquinone. Couples the redox reaction to proton translocation, and thus conserves the redox energy in a proton gradient. Cyanobacterial NDH-1 also plays a role in inorganic carbon-concentration. This is NAD(P)H-quinone oxidoreductase subunit L from Prochlorococcus marinus (strain MIT 9301).